A 757-amino-acid polypeptide reads, in one-letter code: Lysyl oxidase homolog 4 (757 aa).

The first 25 residues, 1 to 25 (MWFLPAALPLLPLLLLLGQAPPSRP), serve as a signal peptide directing secretion. SRCR domains lie at 33-134 (LRLV…VVCN), 160-288 (VRLK…VSCV), 312-412 (VRLR…VRCN), and 422-530 (VRLA…VSCT). Cystine bridges form between C59–C123, C72–C133, C103–C113, C192–C277, C205–C287, C252–C262, C337–C401, C350–C411, C381–C391, C451–C516, C464–C529, C498–C508, C559–C565, C611–C659, C643–C649, C671–C681, and C718–C732. N199 carries an N-linked (GlcNAc...) asparagine glycan. The segment at 534–737 (PDLVMNAQLV…WLHNCHTGDS (204 aa)) is lysyl-oxidase like. Residues H612, H614, and H616 each contribute to the Cu cation site. A glycan (N-linked (GlcNAc...) asparagine) is linked at N630. A cross-link (lysine tyrosylquinone (Lys-Tyr)) is located at residues 639 to 675 (KASFCLEDTNCPTGMQRRYACANFGEQGVTVGCWDTY). Residue Y675 is modified to 2',4',5'-topaquinone.

This sequence belongs to the lysyl oxidase family. The cofactor is Cu cation. Lysine tyrosylquinone residue serves as cofactor. Post-translationally, the lysine tyrosylquinone cross-link (LTQ) is generated by condensation of the epsilon-amino group of a lysine with a topaquinone produced by oxidation of tyrosine. In terms of processing, may be proteolytically cleaved by BMP1.

It is found in the secreted. The protein localises to the extracellular space. The enzyme catalyses L-lysyl-[protein] + O2 + H2O = (S)-2-amino-6-oxohexanoyl-[protein] + H2O2 + NH4(+). Catalyzes the oxidative deamination of lysine and hydroxylysine residues in collagen and elastin, resulting in the formation of covalent cross-linkages, and the stabilization of collagen and elastin fibers. This is Lysyl oxidase homolog 4 (LOXL4) from Bos taurus (Bovine).